The chain runs to 72 residues: UPF0154 protein lhv_1362 (72 aa).

A helical membrane pass occupies residues 3–23 (LGLAIFLIIIALLVGAVAGFY).

It belongs to the UPF0154 family.

The protein localises to the cell membrane. This Lactobacillus helveticus (strain DPC 4571) protein is UPF0154 protein lhv_1362.